A 179-amino-acid chain; its full sequence is Stathmin-2 (179 aa).

Positions methionine 1–tyrosine 26 are membrane attachment. Phosphoserine occurs at positions 16, 50, 62, 73, 80, and 97. Residues aspartate 38–glycine 179 form the SLD domain. Positions aspartate 39 to lysine 96 are regulatory/phosphorylation domain. Positions proline 74–glycine 179 form a coiled coil.

This sequence belongs to the stathmin family. Expression is neuron-specific and found in cerebellum, forebrain, midbrain, tectum and spinal cord.

The protein resides in the cytoplasm. It is found in the perinuclear region. It localises to the cell projection. The protein localises to the growth cone. Its subcellular location is the membrane. The protein resides in the axon. It is found in the lamellipodium. Its function is as follows. Is a key regulator of neurite extension through regulation of microtubule instabilily. This chain is Stathmin-2 (STMN2), found in Gallus gallus (Chicken).